A 30-amino-acid chain; its full sequence is Varv peptide H (30 aa).

Residues 1–30 (GLPVCGETCFGGTCNTPGCSCETWPVCSRN) constitute a cross-link (cyclopeptide (Gly-Asn)). 3 cysteine pairs are disulfide-bonded: C5–C19, C9–C21, and C14–C27.

This is a cyclic peptide.

Its function is as follows. Probably participates in a plant defense mechanism. The polypeptide is Varv peptide H (Viola arvensis (European field pansy)).